Here is a 283-residue protein sequence, read N- to C-terminus: Shikimate dehydrogenase (NADP(+)) (283 aa).

Shikimate contacts are provided by residues 19–21 (SFS) and T66. K70 functions as the Proton acceptor in the catalytic mechanism. An NADP(+)-binding site is contributed by E82. Shikimate is bound by residues N91 and D106. Residues 129-133 (GAGGA) and I225 contribute to the NADP(+) site. Y227 contributes to the shikimate binding site. Residue G248 participates in NADP(+) binding.

It belongs to the shikimate dehydrogenase family. Homodimer.

The catalysed reaction is shikimate + NADP(+) = 3-dehydroshikimate + NADPH + H(+). Its pathway is metabolic intermediate biosynthesis; chorismate biosynthesis; chorismate from D-erythrose 4-phosphate and phosphoenolpyruvate: step 4/7. Functionally, involved in the biosynthesis of the chorismate, which leads to the biosynthesis of aromatic amino acids. Catalyzes the reversible NADPH linked reduction of 3-dehydroshikimate (DHSA) to yield shikimate (SA). This is Shikimate dehydrogenase (NADP(+)) from Methanosphaera stadtmanae (strain ATCC 43021 / DSM 3091 / JCM 11832 / MCB-3).